A 562-amino-acid chain; its full sequence is Serine palmitoyltransferase 2 (562 aa).

The helical transmembrane segment at 67 to 87 (PMLVAVLTYVGYGVLTLFGYL) threads the bilayer. Lysine 379 bears the N6-(pyridoxal phosphate)lysine mark.

The protein belongs to the class-II pyridoxal-phosphate-dependent aminotransferase family. Component of the serine palmitoyltransferase (SPT) complex, which is composed of SPTLC1, SPTLC2 or SPTLC3 and SPTSSA or SPTSSB. The heterodimer consisting of SPTLC1 and SPTLC2/SPTLC3 forms the catalytic core of the enzyme, while SPTSSA or SPTSSB subunits determine substrate specificity. SPT also interacts with ORMDL proteins, especially ORMDL3, which negatively regulate SPT activity in the presence of ceramides. Forms dimers of heterodimers with SPTLC1. It depends on pyridoxal 5'-phosphate as a cofactor. As to expression, widely expressed.

The protein resides in the endoplasmic reticulum membrane. The catalysed reaction is L-serine + hexadecanoyl-CoA + H(+) = 3-oxosphinganine + CO2 + CoA. The enzyme catalyses octadecanoyl-CoA + L-serine + H(+) = 3-oxoeicosasphinganine + CO2 + CoA. It functions in the pathway lipid metabolism; sphingolipid metabolism. Its activity is regulated as follows. SPT complex catalytic activity is negatively regulated by ORMDL proteins, including ORMDL3, in the presence of ceramides. This mechanism allows to maintain ceramide levels at sufficient concentrations for the production of complex sphingolipids, but which prevents the accumulation of ceramides to levels that trigger apoptosis. Its function is as follows. Component of the serine palmitoyltransferase multisubunit enzyme (SPT) that catalyzes the initial and rate-limiting step in sphingolipid biosynthesis by condensing L-serine and activated acyl-CoA (most commonly palmitoyl-CoA) to form long-chain bases. The SPT complex is composed of SPTLC1, SPTLC2 or SPTLC3 and SPTSSA or SPTSSB. Within this complex, the heterodimer consisting of SPTLC1 and SPTLC2/SPTLC3 forms the catalytic core. The composition of the serine palmitoyltransferase (SPT) complex determines the substrate preference. The SPTLC1-SPTLC2-SPTSSA complex shows a strong preference for C16-CoA substrate, while the SPTLC1-SPTLC3-SPTSSA isozyme uses both C14-CoA and C16-CoA as substrates, with a slight preference for C14-CoA. The SPTLC1-SPTLC2-SPTSSB complex shows a strong preference for C18-CoA substrate, while the SPTLC1-SPTLC3-SPTSSB isozyme displays an ability to use a broader range of acyl-CoAs, without apparent preference. Crucial for adipogenesis. This Homo sapiens (Human) protein is Serine palmitoyltransferase 2.